A 375-amino-acid polypeptide reads, in one-letter code: Alcohol dehydrogenase B (375 aa).

Zn(2+) contacts are provided by C40, H62, C92, C95, C98, C106, and C169.

Belongs to the zinc-containing alcohol dehydrogenase family. Zn(2+) serves as cofactor.

It is found in the cytoplasm. It catalyses the reaction a primary alcohol + NAD(+) = an aldehyde + NADH + H(+). The catalysed reaction is a secondary alcohol + NAD(+) = a ketone + NADH + H(+). The chain is Alcohol dehydrogenase B (adhB) from Mycobacterium bovis (strain ATCC BAA-935 / AF2122/97).